The following is a 114-amino-acid chain: Dolichyl-diphosphooligosaccharide--protein glycosyltransferase subunit DAD1 (114 aa).

The Cytoplasmic portion of the chain corresponds to 1–30 (MPRATSDAKLLIQSLGKAYAATPTNLKIID). Residues 31-51 (LYVVFAVATALIQVVYMGIVG) form a helical membrane-spanning segment. Residues 52-54 (SFP) lie on the Lumenal side of the membrane. A helical transmembrane segment spans residues 55 to 75 (FNSFLSGVLSCIGTAVLAVCL). The Cytoplasmic segment spans residues 76 to 93 (RIQVNKDNKEFKDLPPER). The helical transmembrane segment at 94–114 (AFADFVLCNLVLHLVIMNFLG) threads the bilayer.

It belongs to the DAD/OST2 family. Component of the oligosaccharyltransferase (OST) complex.

It is found in the endoplasmic reticulum membrane. It participates in protein modification; protein glycosylation. In terms of biological role, subunit of the oligosaccharyl transferase (OST) complex that catalyzes the initial transfer of a defined glycan (Glc(3)Man(9)GlcNAc(2) in eukaryotes) from the lipid carrier dolichol-pyrophosphate to an asparagine residue within an Asn-X-Ser/Thr consensus motif in nascent polypeptide chains, the first step in protein N-glycosylation. N-glycosylation occurs cotranslationally and the complex associates with the Sec61 complex at the channel-forming translocon complex that mediates protein translocation across the endoplasmic reticulum (ER). All subunits are required for a maximal enzyme activity. The chain is Dolichyl-diphosphooligosaccharide--protein glycosyltransferase subunit DAD1 (DAD1) from Oryza sativa subsp. indica (Rice).